The chain runs to 112 residues: Putative pterin-4-alpha-carbinolamine dehydratase (112 aa).

It belongs to the pterin-4-alpha-carbinolamine dehydratase family.

It carries out the reaction (4aS,6R)-4a-hydroxy-L-erythro-5,6,7,8-tetrahydrobiopterin = (6R)-L-erythro-6,7-dihydrobiopterin + H2O. This chain is Putative pterin-4-alpha-carbinolamine dehydratase, found in Vibrio parahaemolyticus serotype O3:K6 (strain RIMD 2210633).